Reading from the N-terminus, the 263-residue chain is Histidine racemase (263 aa).

Cysteine 67 functions as the Proton acceptor in the catalytic mechanism. The Proton donor role is filled by cysteine 209.

It belongs to the histidine racemase family. Homodimer.

It carries out the reaction L-histidine = D-histidine. In terms of biological role, cofactor-independent isomerase that catalyzes the reversible conversion of L-histidine to D-histidine. May play a role in growth of F.nucleatum. In Fusobacterium nucleatum subsp. nucleatum (strain ATCC 23726 / VPI 4351), this protein is Histidine racemase.